Here is a 580-residue protein sequence, read N- to C-terminus: Glutamyl-tRNA(Gln) amidotransferase subunit B-2, chloroplastic/mitochondrial (580 aa).

Composition is skewed to low complexity over residues 20 to 35 and 42 to 59; these read RRDATAAASTSAATVS and AVSTTTTTSSSSSSSAAV. The segment at 20–64 is disordered; sequence RRDATAAASTSAATVSRGRRARAVSTTTTTSSSSSSSAAVDARDA.

The protein belongs to the GatB/GatE family. GatB subfamily. Subunit of the heterotrimeric GatCAB amidotransferase (AdT) complex, composed of A, B and C subunits.

The protein localises to the mitochondrion. The protein resides in the plastid. Its subcellular location is the chloroplast. The catalysed reaction is L-glutamyl-tRNA(Gln) + L-glutamine + ATP + H2O = L-glutaminyl-tRNA(Gln) + L-glutamate + ADP + phosphate + H(+). Its function is as follows. Allows the formation of correctly charged Gln-tRNA(Gln) through the transamidation of misacylated Glu-tRNA(Gln) in chloroplasts and mitochondria. The reaction takes place in the presence of glutamine and ATP through an activated gamma-phospho-Glu-tRNA(Gln). In Micromonas pusilla (strain CCMP1545) (Picoplanktonic green alga), this protein is Glutamyl-tRNA(Gln) amidotransferase subunit B-2, chloroplastic/mitochondrial.